The chain runs to 987 residues: Transposase for transposon Tn4430 (987 aa).

Belongs to the transposase 7 family.

Required for transposition of transposon Tn4430. The sequence is that of Transposase for transposon Tn4430 (tnpA) from Bacillus thuringiensis.